A 269-amino-acid chain; its full sequence is ParA family protein MG470 (269 aa).

The protein belongs to the ParA family.

The polypeptide is ParA family protein MG470 (Mycoplasma genitalium (strain ATCC 33530 / DSM 19775 / NCTC 10195 / G37) (Mycoplasmoides genitalium)).